The sequence spans 330 residues: Ferredoxin--NADP reductase (330 aa).

Residues Glu-35, Gln-43, Tyr-48, Val-90, Phe-123, Asp-285, and Thr-326 each contribute to the FAD site.

The protein belongs to the ferredoxin--NADP reductase type 2 family. In terms of assembly, homodimer. It depends on FAD as a cofactor.

The catalysed reaction is 2 reduced [2Fe-2S]-[ferredoxin] + NADP(+) + H(+) = 2 oxidized [2Fe-2S]-[ferredoxin] + NADPH. This Streptococcus pyogenes serotype M6 (strain ATCC BAA-946 / MGAS10394) protein is Ferredoxin--NADP reductase.